The sequence spans 309 residues: Anamorsin (309 aa).

Residues 6 to 172 form an N-terminal SAM-like domain region; the sequence is ISPGQLVAVF…KPNFEVGSSS (167 aa). The tract at residues 173–222 is linker; that stretch reads QLKLPNKKSSSVKPVVDPAAAKLWTLSANDMEDDSVDLIDSDELLDPEDL. Serine 182, serine 183, and serine 213 each carry phosphoserine. Positions 235, 244, 247, and 249 each coordinate [2Fe-2S] cluster. A fe-S binding site A region spans residues 235 to 249; it reads CGEGKKRKACKNCTC. The residue at position 269 (serine 269) is a Phosphoserine. [4Fe-4S] cluster is bound by residues cysteine 271, cysteine 274, cysteine 282, and cysteine 285. 2 short sequence motifs (cx2C motif) span residues 271-274 and 282-285; these read CGNC and CANC. The segment at 271–285 is fe-S binding site B; it reads CGNCYLGDAFRCANC. 2 positions are modified to phosphoserine: serine 302 and serine 304.

Belongs to the anamorsin family. Monomer. Interacts with NDOR1. Interacts with CHCHD4. It depends on [2Fe-2S] cluster as a cofactor. [4Fe-4S] cluster serves as cofactor.

The protein localises to the cytoplasm. It localises to the nucleus. The protein resides in the mitochondrion intermembrane space. In terms of biological role, component of the cytosolic iron-sulfur (Fe-S) protein assembly (CIA) machinery required for the maturation of extramitochondrial Fe-S proteins. Part of an electron transfer chain functioning in an early step of cytosolic Fe-S biogenesis, facilitating the de novo assembly of a [4Fe-4S] cluster on the scaffold complex NUBP1-NUBP2. Electrons are transferred to CIAPIN1 from NADPH via the FAD- and FMN-containing protein NDOR1. NDOR1-CIAPIN1 are also required for the assembly of the diferric tyrosyl radical cofactor of ribonucleotide reductase (RNR), probably by providing electrons for reduction during radical cofactor maturation in the catalytic small subunit. Has anti-apoptotic effects in the cell. Involved in negative control of cell death upon cytokine withdrawal. Promotes development of hematopoietic cells. This is Anamorsin from Mus musculus (Mouse).